Consider the following 258-residue polypeptide: Deoxyribose-phosphate aldolase (258 aa).

D101 serves as the catalytic Proton donor/acceptor. Catalysis depends on K166, which acts as the Schiff-base intermediate with acetaldehyde. K200 (proton donor/acceptor) is an active-site residue.

This sequence belongs to the DeoC/FbaB aldolase family. DeoC type 2 subfamily.

It is found in the cytoplasm. The catalysed reaction is 2-deoxy-D-ribose 5-phosphate = D-glyceraldehyde 3-phosphate + acetaldehyde. Its pathway is carbohydrate degradation; 2-deoxy-D-ribose 1-phosphate degradation; D-glyceraldehyde 3-phosphate and acetaldehyde from 2-deoxy-alpha-D-ribose 1-phosphate: step 2/2. In terms of biological role, catalyzes a reversible aldol reaction between acetaldehyde and D-glyceraldehyde 3-phosphate to generate 2-deoxy-D-ribose 5-phosphate. The sequence is that of Deoxyribose-phosphate aldolase from Haemophilus ducreyi (strain 35000HP / ATCC 700724).